A 424-amino-acid chain; its full sequence is Histidinol dehydrogenase (424 aa).

NAD(+) is bound by residues tyrosine 124, glutamine 186, and asparagine 209. 3 residues coordinate substrate: serine 232, glutamine 254, and histidine 257. Positions 254 and 257 each coordinate Zn(2+). Residues glutamate 322 and histidine 323 each act as proton acceptor in the active site. Histidine 323, aspartate 356, glutamate 410, and histidine 415 together coordinate substrate. Aspartate 356 serves as a coordination point for Zn(2+). Residue histidine 415 participates in Zn(2+) binding.

Belongs to the histidinol dehydrogenase family. Zn(2+) is required as a cofactor.

It carries out the reaction L-histidinol + 2 NAD(+) + H2O = L-histidine + 2 NADH + 3 H(+). The protein operates within amino-acid biosynthesis; L-histidine biosynthesis; L-histidine from 5-phospho-alpha-D-ribose 1-diphosphate: step 9/9. Catalyzes the sequential NAD-dependent oxidations of L-histidinol to L-histidinaldehyde and then to L-histidine. This is Histidinol dehydrogenase from Moorella thermoacetica (strain ATCC 39073 / JCM 9320).